The following is a 455-amino-acid chain: Ribosomal protein uS12 methylthiotransferase RimO (455 aa).

The region spanning 1 to 114 (MKYHIVTLGC…INALVGQLER (114 aa)) is the MTTase N-terminal domain. Residues Cys-10, Cys-46, Cys-78, Cys-166, Cys-170, and Cys-173 each contribute to the [4Fe-4S] cluster site. Residues 152-383 (THQTPSAYLK…MRLQQTISYT (232 aa)) enclose the Radical SAM core domain. Residues 386–455 (QRWVGRTIKV…AYDLWGEALS (70 aa)) enclose the TRAM domain.

This sequence belongs to the methylthiotransferase family. RimO subfamily. The cofactor is [4Fe-4S] cluster.

The protein localises to the cytoplasm. The catalysed reaction is L-aspartate(89)-[ribosomal protein uS12]-hydrogen + (sulfur carrier)-SH + AH2 + 2 S-adenosyl-L-methionine = 3-methylsulfanyl-L-aspartate(89)-[ribosomal protein uS12]-hydrogen + (sulfur carrier)-H + 5'-deoxyadenosine + L-methionine + A + S-adenosyl-L-homocysteine + 2 H(+). Functionally, catalyzes the methylthiolation of an aspartic acid residue of ribosomal protein uS12. The sequence is that of Ribosomal protein uS12 methylthiotransferase RimO from Chloroflexus aurantiacus (strain ATCC 29366 / DSM 635 / J-10-fl).